A 459-amino-acid polypeptide reads, in one-letter code: Palmitoyltransferase PFA4 (459 aa).

Residues 1-9 (MAARNWSRV) are Cytoplasmic-facing. The chain crosses the membrane as a helical span at residues 10 to 30 (WVGGTVILISFIAFSSQIFVI). Residues 31–37 (WPWYGRE) are Lumenal-facing. A helical membrane pass occupies residues 38-58 (ISLDLLKLLVPLNLAAFMIFW). The Cytoplasmic portion of the chain corresponds to 59-138 (NYRLCVITSP…GNCVGFYNQG (80 aa)). In terms of domain architecture, DHHC spans 95–145 (RYCKNCEHYKPPRAHHCRQCKTCWLKLDHHCPWIGNCVGFYNQGHFIRFLL). The active-site S-palmitoyl cysteine intermediate is the cysteine 125. Residues 139–159 (HFIRFLLWVDIGTTFHLIIMV) form a helical membrane-spanning segment. The Lumenal portion of the chain corresponds to 160–177 (RRVLYIAEYYHQEPTLAD). Residues 178 to 198 (VLFLVFNFATCVPVWLCVGMF) traverse the membrane as a helical segment. The Cytoplasmic portion of the chain corresponds to 199–459 (SIYHVYLACG…DTEEESGYAH (261 aa)). Residues 278–379 (HTTQYFWPPQ…DYDHYDEGPM (102 aa)) form a disordered region. Positions 286–299 (PQDPSRLPNPPPIP) are enriched in pro residues. Over residues 310-322 (NGFNPNLQPTNSL) the composition is skewed to polar residues. The segment covering 331–356 (HIDEDEHSHERDQYRHYSSGEERDND) has biased composition (basic and acidic residues).

This sequence belongs to the DHHC palmitoyltransferase family. PFA4 subfamily.

The protein resides in the endoplasmic reticulum membrane. The catalysed reaction is L-cysteinyl-[protein] + hexadecanoyl-CoA = S-hexadecanoyl-L-cysteinyl-[protein] + CoA. Its function is as follows. Mediates the reversible addition of palmitate to target proteins, thereby regulating their membrane association and biological function. The protein is Palmitoyltransferase PFA4 of Cryptococcus neoformans var. neoformans serotype D (strain B-3501A) (Filobasidiella neoformans).